A 481-amino-acid polypeptide reads, in one-letter code: Alginate biosynthesis protein AlgA (481 aa).

This sequence belongs to the mannose-6-phosphate isomerase type 2 family. In terms of assembly, monomer. It depends on Co(2+) as a cofactor.

It carries out the reaction D-mannose 6-phosphate = D-fructose 6-phosphate. The enzyme catalyses alpha-D-mannose 1-phosphate + GTP + H(+) = GDP-alpha-D-mannose + diphosphate. It participates in nucleotide-sugar biosynthesis; GDP-alpha-D-mannose biosynthesis; GDP-alpha-D-mannose from alpha-D-mannose 1-phosphate (GTP route): step 1/1. It functions in the pathway nucleotide-sugar biosynthesis; GDP-alpha-D-mannose biosynthesis; alpha-D-mannose 1-phosphate from D-fructose 6-phosphate: step 1/2. In terms of biological role, produces a precursor for alginate polymerization. The alginate layer provides a protective barrier against host immune defenses and antibiotics. In Pseudomonas aeruginosa (strain ATCC 15692 / DSM 22644 / CIP 104116 / JCM 14847 / LMG 12228 / 1C / PRS 101 / PAO1), this protein is Alginate biosynthesis protein AlgA (algA).